The sequence spans 332 residues: MERIISELEMPNEIEIQKSLRPKSFDEYIGQENLKEKMSISIKAAQKRNMVVDHILLYGPPGLGKTTLAGVIANEMKANLKITSGPILEKAGDLAAILTSLEENDILFIDEIHRLNSTVEEILYPAMEDGELDIIIGKGPSAKSIRIELPPFTLIGATTRAGLLSAPLRDRFGVSHKMEYYNENEIKSIIIRGAKILGVKINEDGAIEISKRSRGTPRIANRLLKRVRDYCEIKGNGTIDKLSAKNALDMLGVDSNGLDDLDRNIINSIIENYDGGPVGIETLSLLLGEDRRTLEEVYEPYLVKIGFLKRTNRGRVVTSKAYQHFKKVEVKI.

The interval Met-1–Tyr-181 is large ATPase domain (RuvB-L). Leu-20, Arg-21, Gly-62, Lys-65, Thr-66, Thr-67, Arg-171, Tyr-181, and Arg-218 together coordinate ATP. Thr-66 provides a ligand contact to Mg(2+). The tract at residues Asn-182–Gly-252 is small ATPAse domain (RuvB-S). The interval Ser-255 to Ile-332 is head domain (RuvB-H). Positions 291, 310, and 315 each coordinate DNA.

It belongs to the RuvB family. As to quaternary structure, homohexamer. Forms an RuvA(8)-RuvB(12)-Holliday junction (HJ) complex. HJ DNA is sandwiched between 2 RuvA tetramers; dsDNA enters through RuvA and exits via RuvB. An RuvB hexamer assembles on each DNA strand where it exits the tetramer. Each RuvB hexamer is contacted by two RuvA subunits (via domain III) on 2 adjacent RuvB subunits; this complex drives branch migration. In the full resolvosome a probable DNA-RuvA(4)-RuvB(12)-RuvC(2) complex forms which resolves the HJ.

It localises to the cytoplasm. It carries out the reaction ATP + H2O = ADP + phosphate + H(+). Functionally, the RuvA-RuvB-RuvC complex processes Holliday junction (HJ) DNA during genetic recombination and DNA repair, while the RuvA-RuvB complex plays an important role in the rescue of blocked DNA replication forks via replication fork reversal (RFR). RuvA specifically binds to HJ cruciform DNA, conferring on it an open structure. The RuvB hexamer acts as an ATP-dependent pump, pulling dsDNA into and through the RuvAB complex. RuvB forms 2 homohexamers on either side of HJ DNA bound by 1 or 2 RuvA tetramers; 4 subunits per hexamer contact DNA at a time. Coordinated motions by a converter formed by DNA-disengaged RuvB subunits stimulates ATP hydrolysis and nucleotide exchange. Immobilization of the converter enables RuvB to convert the ATP-contained energy into a lever motion, pulling 2 nucleotides of DNA out of the RuvA tetramer per ATP hydrolyzed, thus driving DNA branch migration. The RuvB motors rotate together with the DNA substrate, which together with the progressing nucleotide cycle form the mechanistic basis for DNA recombination by continuous HJ branch migration. Branch migration allows RuvC to scan DNA until it finds its consensus sequence, where it cleaves and resolves cruciform DNA. This is Holliday junction branch migration complex subunit RuvB from Fusobacterium nucleatum subsp. nucleatum (strain ATCC 25586 / DSM 15643 / BCRC 10681 / CIP 101130 / JCM 8532 / KCTC 2640 / LMG 13131 / VPI 4355).